Here is an 82-residue protein sequence, read N- to C-terminus: Large ribosomal subunit protein bL28 (82 aa).

The protein belongs to the bacterial ribosomal protein bL28 family.

The polypeptide is Large ribosomal subunit protein bL28 (Vesicomyosocius okutanii subsp. Calyptogena okutanii (strain HA)).